The sequence spans 473 residues: Microtubule-binding protein TANGLED (473 aa).

The interval 1 to 132 is required for binding to TAN and location to the cortical division sites (CDS) during cytokinesis; that stretch reads MVARTPQKQR…VTRDIVDAIA (132 aa). 2 disordered regions span residues 131–218 and 290–354; these read IAPK…ENSF and ASKF…LSTA. Polar residues-rich tracts occupy residues 205–216 and 307–329; these read ISPQVKGNNGEN and PTRNGSNSVRKSPRGSRSPTRTV.

In terms of assembly, interacts with POK1. As to expression, strongly expressed in flower buds and root tips.

The protein resides in the nucleus. It is found in the nucleolus. Its subcellular location is the cytoplasm. It localises to the cytoskeleton. The protein localises to the phragmoplast. Is required for spatial control cell division during plant development. Through an association with microtubules, acts both for the positioning of cytoskeletal arrays that establish planes of cell division during prophase and for spatial guidance of expanding phragmoplasts toward preestablished cortical division sites (CDS) during cytokinesis. The protein is Microtubule-binding protein TANGLED (TAN) of Arabidopsis thaliana (Mouse-ear cress).